We begin with the raw amino-acid sequence, 116 residues long: Spexin (116 aa).

A signal peptide spans 1–26 (MKGPSVLAVTAVVLLLVLSALENSSG). The propeptide occupies 27-35 (APQRLSEKR). A Glutamine amide modification is found at Gln49. Propeptides lie at residues 50-116 (GRRF…LFNW) and 74-116 (PDLE…LFNW). Residues 52-77 (RFLSDQSRRKELADRPPPERRNPDLE) are disordered. The segment covering 53 to 75 (FLSDQSRRKELADRPPPERRNPD) has biased composition (basic and acidic residues).

The protein belongs to the spexin family.

The protein resides in the secreted. It is found in the extracellular space. Its subcellular location is the cytoplasmic vesicle. It localises to the secretory vesicle. Functionally, plays a role as a central modulator of cardiovascular and renal function and nociception. Also plays a role in energy metabolism and storage. Inhibits adrenocortical cell proliferation with minor stimulation on corticosteroid release. Its function is as follows. Acts as a ligand for galanin receptors GALR2 and GALR3. Intracerebroventricular administration of the peptide induces an increase in arterial blood pressure, a decrease in both heart rate and renal excretion and delayed natriuresis. Intraventricular administration of the peptide induces antinociceptive activity. Also induces contraction of muscarinic-like stomach smooth muscles. Intraperitoneal administration of the peptide induces a reduction in food consumption and body weight. Inhibits long chain fatty acid uptake into adipocytes. In terms of biological role, intracerebroventricular administration of the peptide induces a decrease in heart rate, but no change in arterial pressure, and an increase in urine flow rate. Intraventricular administration of the peptide induces antinociceptive activity. This is Spexin (Spx) from Mus musculus (Mouse).